A 938-amino-acid polypeptide reads, in one-letter code: Histone deacetylase 7 (938 aa).

Residues 1–40 (MHSPGAGCPALQPDTPGSQPQPMDLRVGQRPTVEPPPEPA) form a disordered region. The interval 1-121 (MHSPGAGCPA…LAEVILKKQQ (121 aa)) is interaction with MEF2C. Transcription repression stretches follow at residues 2–254 (HSPG…DGDR) and 241–533 (GPNP…EHAG). Residues 72 to 172 (SMDPPMPELQ…LPTEPPEHFP (101 aa)) are interaction with MEF2A. At Ser132 the chain carries Phosphoserine. 4 disordered regions span residues 155 to 280 (SFLP…HHGL), 331 to 361 (SGSG…APLQ), 373 to 463 (LIKP…DSVL), and 472 to 491 (RPLS…LSPE). Phosphoserine; by MARK2, MARK3 and PKD/PRKD1 is present on Ser178. Positions 190–204 (KSLERRKNPLLRKES) are enriched in basic and acidic residues. Ser204 carries the post-translational modification Phosphoserine; by PKD/PRKD2. The segment covering 220-235 (SSPSSSSTPASGCSSP) has biased composition (low complexity). Ser344 is modified (phosphoserine; by PKD/PRKD1). Phosphoserine is present on residues Ser350 and Ser398. Residues 350–361 (SATASPLLAPLQ) are compositionally biased toward low complexity. 2 stretches are compositionally biased toward low complexity: residues 429-448 (GRGS…EQQH) and 479-491 (SSPA…LSPE). At Ser479 the chain carries Phosphoserine; by PKD/PRKD1. Position 480 is a phosphoserine (Ser480). The tract at residues 505 to 852 (PATGLVYDSV…VAALLGNKVD (348 aa)) is histone deacetylase. Residues Cys520, Cys522, and His528 each coordinate Zn(2+). Ser582 carries the phosphoserine modification. Cys605 is a binding site for Zn(2+). His657 is an active-site residue. An interaction with SIN3A region spans residues 864–938 (NLSAIRSLEA…LVEEEEPMNL (75 aa)). The short motif at 904 to 938 (AEVEAVTALASLSVGILAEDRPSERLVEEEEPMNL) is the Nuclear export signal element.

The protein belongs to the histone deacetylase family. HD type 2 subfamily. As to quaternary structure, interacts with HDAC1, HDAC2, HDAC3, HDAC4, HDAC5, NCOR1, NCOR2, SIN3A, SIN3B, RBBP4, RBBP7, MTA1L1, SAP30 and MBD3. Interacts with KAT5 and EDNRA. Interacts with the 14-3-3 protein YWHAE, MEF2A, MEF2B and MEF2C. Interacts with ZMYND15. Interacts with KDM5B. Interacts with PML. Interacts with FOXP3. Interacts with RARA. Post-translationally, may be phosphorylated by CaMK1. Phosphorylated by the PKC kinases PKN1 and PKN2, impairing nuclear import. Phosphorylation at Ser-178 by MARK2, MARK3 and PRKD1 promotes interaction with 14-3-3 proteins and export from the nucleus. Phosphorylation at Ser-178 is a prerequisite for phosphorylation at Ser-204. Highly expressed in heart and lung. Expressed at intermediate level in muscle.

The protein resides in the nucleus. It is found in the cytoplasm. It catalyses the reaction N(6)-acetyl-L-lysyl-[histone] + H2O = L-lysyl-[histone] + acetate. The catalysed reaction is N(6)-acetyl-L-lysyl-[protein] + H2O = L-lysyl-[protein] + acetate. Its activity is regulated as follows. Its activity is inhibited by Trichostatin A (TSA), a known histone deacetylase inhibitor. Responsible for the deacetylation of lysine residues on the N-terminal part of the core histones (H2A, H2B, H3 and H4). Histone deacetylation gives a tag for epigenetic repression and plays an important role in transcriptional regulation, cell cycle progression and developmental events. Histone deacetylases act via the formation of large multiprotein complexes. Involved in muscle maturation by repressing transcription of myocyte enhancer factors such as MEF2A, MEF2B and MEF2C. During muscle differentiation, it shuttles into the cytoplasm, allowing the expression of myocyte enhancer factors. Positively regulates the transcriptional repressor activity of FOXP3. Serves as a corepressor of RARA, causing its deacetylation and inhibition of RARE DNA element binding. In association with RARA, plays a role in the repression of microRNA-10a and thereby in the inflammatory response. Also acetylates non-histone proteins, such as ALKBH5. The polypeptide is Histone deacetylase 7 (Hdac7) (Mus musculus (Mouse)).